We begin with the raw amino-acid sequence, 308 residues long: Aspartate carbamoyltransferase catalytic subunit (308 aa).

Positions 50 and 51 each coordinate carbamoyl phosphate. K78 contacts L-aspartate. Residues R100, H131, and Q134 each contribute to the carbamoyl phosphate site. 2 residues coordinate L-aspartate: R164 and R216. Carbamoyl phosphate contacts are provided by A259 and P260.

This sequence belongs to the aspartate/ornithine carbamoyltransferase superfamily. ATCase family. In terms of assembly, heterododecamer (2C3:3R2) of six catalytic PyrB chains organized as two trimers (C3), and six regulatory PyrI chains organized as three dimers (R2).

It catalyses the reaction carbamoyl phosphate + L-aspartate = N-carbamoyl-L-aspartate + phosphate + H(+). It participates in pyrimidine metabolism; UMP biosynthesis via de novo pathway; (S)-dihydroorotate from bicarbonate: step 2/3. Its function is as follows. Catalyzes the condensation of carbamoyl phosphate and aspartate to form carbamoyl aspartate and inorganic phosphate, the committed step in the de novo pyrimidine nucleotide biosynthesis pathway. This is Aspartate carbamoyltransferase catalytic subunit from Oenococcus oeni (strain ATCC BAA-331 / PSU-1).